The chain runs to 245 residues: tRNA pseudouridine synthase A (245 aa).

The active-site Nucleophile is Asp52. Tyr111 provides a ligand contact to substrate.

Belongs to the tRNA pseudouridine synthase TruA family. Homodimer.

It catalyses the reaction uridine(38/39/40) in tRNA = pseudouridine(38/39/40) in tRNA. In terms of biological role, formation of pseudouridine at positions 38, 39 and 40 in the anticodon stem and loop of transfer RNAs. This chain is tRNA pseudouridine synthase A, found in Ehrlichia chaffeensis (strain ATCC CRL-10679 / Arkansas).